The chain runs to 181 residues: Reverse rubrerythrin-1 (181 aa).

A Rubredoxin-like domain is found at 1-35 (MKKFKCVVCGYIYTGEDAPEKCPVCGAGKDKFVEV). 9 residues coordinate Fe cation: Cys6, Cys9, Cys22, Cys25, Glu69, Glu102, Glu132, Glu165, and His168. Positions 52-181 (KGVDKEVLEG…FRGLLNRYFK (130 aa)) constitute a Ferritin-like diiron domain.

Homodimer. It depends on Fe(3+) as a cofactor.

The catalysed reaction is H2O2 + NADH + H(+) = NAD(+) + 2 H2O. Its function is as follows. Functions as the terminal component of an NADH peroxidase (NADH:H(2)O(2) oxidoreductase) when using NADH:rubredoxin oxidoreductase (NROR) and rubredoxin (Rd) as electron transport intermediaries from NADH to revRbr 1. Plays an important role in the oxidative stress defense system in C.acetobutylicum, an obligate anaerobic bacterium. Also exhibits NADH oxidase (NADH:O(2) oxidoreductase) activity in vitro, which is 100-fold lesser than that of FprA1/2 using the same electron transfer components. Therefore, its predominant function is most likely as a scavenger of its preferred substrate, H(2)O(2). This chain is Reverse rubrerythrin-1 (rbr3A), found in Clostridium acetobutylicum (strain ATCC 824 / DSM 792 / JCM 1419 / IAM 19013 / LMG 5710 / NBRC 13948 / NRRL B-527 / VKM B-1787 / 2291 / W).